Reading from the N-terminus, the 369-residue chain is Xylene/toluene monooxygenase hydroxylase component XylM (369 aa).

3 helical membrane-spanning segments follow: residues 8 to 28, 60 to 80, and 91 to 111; these read LIPV…YWVW, LTQY…VFGV, and LQVA…TLPV. Residues His-113, His-117, His-143, His-147, and His-148 each contribute to the Fe cation site. The chain crosses the membrane as a helical span at residues 207-227; that stretch reads VALLLALPGLVSYLGGPALGL. His-282, His-285, and His-286 together coordinate Fe cation. The helical transmembrane segment at 305–325 threads the bilayer; sequence MPSLFVCFLLGLIPPLWFALI.

It belongs to the fatty acid desaturase type 1 family. AlkB subfamily. As to quaternary structure, the xylene/toluene monooxygenase is composed of two subunits: the electron transfer component XylA and the hydroxylase component XylM. Fe(2+) is required as a cofactor.

Its subcellular location is the cell inner membrane. The catalysed reaction is m-xylene + 2 reduced [2Fe-2S]-[ferredoxin] + O2 + 2 H(+) = 3-methylbenzyl alcohol + 2 oxidized [2Fe-2S]-[ferredoxin] + H2O. The enzyme catalyses p-xylene + 2 reduced [2Fe-2S]-[ferredoxin] + O2 + 2 H(+) = 4-methylbenzyl alcohol + 2 oxidized [2Fe-2S]-[ferredoxin] + H2O. It catalyses the reaction toluene + 2 reduced [2Fe-2S]-[ferredoxin] + O2 + 2 H(+) = benzyl alcohol + 2 oxidized [2Fe-2S]-[ferredoxin] + H2O. In terms of biological role, component of a monooxygenase that catalyzes the first step in the degradation of xylenes and toluenes. XylM catalyzes the hydroxylation of the methyl side chain of xylenes and toluenes. The electrons are provided by the electron transfer component XylA. The best substrates are m-xylene and p-xylene, followed by toluene. Shows weak activity with o-xylene. In vitro, is also active with substituted compounds, such as chlorotoluenes. Cannot use benzyl alcohol. This is Xylene/toluene monooxygenase hydroxylase component XylM from Pseudomonas putida (Arthrobacter siderocapsulatus).